A 63-amino-acid polypeptide reads, in one-letter code: Large ribosomal subunit protein uL29 (63 aa).

It belongs to the universal ribosomal protein uL29 family.

In Psychromonas ingrahamii (strain DSM 17664 / CCUG 51855 / 37), this protein is Large ribosomal subunit protein uL29.